The chain runs to 678 residues: NADPH--cytochrome P450 reductase (678 aa).

Residues 1 to 21 (MADSNMDAGTTTSEMVAEEVS) lie on the Lumenal side of the membrane. A helical transmembrane segment spans residues 22–42 (LFSTTDVILFSLIVGVMTYWF). Residues 43–678 (LFRKKKEEVP…KGRYSLDVWS (636 aa)) are Cytoplasmic-facing. Residue serine 63 is modified to Phosphoserine. The region spanning 80–224 (IIVFYGSQTG…DFITWREQFW (145 aa)) is the Flavodoxin-like domain. Residues 86–91 (SQTGTA), 138–141 (ATYG), 173–182 (LGNKTYEHFN), and aspartate 208 each bind FMN. The FAD-binding FR-type domain maps to 279 to 521 (KNPFLAVVTT…YVRKSQFRLP (243 aa)). Arginine 298 contributes to the NADP(+) binding site. Residues arginine 424, 454 to 457 (RYYS), 472 to 474 (CAV), tyrosine 478, and 488 to 491 (GVAT) each bind FAD. NADP(+)-binding positions include threonine 535, 596-597 (SR), 602-606 (KVYVQ), and aspartate 639. Tryptophan 677 is an FAD binding site.

It belongs to the NADPH--cytochrome P450 reductase family. This sequence in the N-terminal section; belongs to the flavodoxin family. In the C-terminal section; belongs to the flavoprotein pyridine nucleotide cytochrome reductase family. FAD is required as a cofactor. FMN serves as cofactor.

Its subcellular location is the endoplasmic reticulum membrane. The enzyme catalyses 2 oxidized [cytochrome P450] + NADPH = 2 reduced [cytochrome P450] + NADP(+) + H(+). In terms of biological role, this enzyme is required for electron transfer from NADP to cytochrome P450 in microsomes. It can also provide electron transfer to heme oxygenase and cytochrome B5. The protein is NADPH--cytochrome P450 reductase of Bos taurus (Bovine).